Reading from the N-terminus, the 49-residue chain is Large ribosomal subunit protein bL33A (49 aa).

It belongs to the bacterial ribosomal protein bL33 family.

The chain is Large ribosomal subunit protein bL33A from Geobacillus thermodenitrificans (strain NG80-2).